Reading from the N-terminus, the 117-residue chain is Immunoglobulin heavy variable 3-5 (117 aa).

Positions 1–18 (MKMFTLLYLLTVVPGILS) are cleaved as a signal peptide. In terms of domain architecture, Ig-like spans 19–117 (DVQLQESGPG…EDTATYYCAR (99 aa)). An intrachain disulfide couples cysteine 40 to cysteine 115.

The protein is Immunoglobulin heavy variable 3-5 of Mus musculus (Mouse).